The chain runs to 225 residues: UPF0758 protein NMCC_1157 (225 aa).

The 123-residue stretch at 102–224 (VLSDPDTVAD…VRSFRQLGLM (123 aa)) folds into the MPN domain. Zn(2+) is bound by residues His173, His175, and Asp186. A JAMM motif motif is present at residues 173 to 186 (HNHPGGSPEPSQED).

Belongs to the UPF0758 family.

This Neisseria meningitidis serogroup C (strain 053442) protein is UPF0758 protein NMCC_1157.